The chain runs to 206 residues: Transmembrane emp24 domain-containing protein bai (206 aa).

The signal sequence occupies residues 1–20; it reads MMKAILATLAIFGCIWPGQS. Over 21–172 the chain is Lumenal; the sequence is VMFHLTPNTQ…RDTNEKTNSR (152 aa). The region spanning 30–140 is the GOLD domain; that stretch reads QKCLKEDIQA…LKPLEVDLKR (111 aa). A helical membrane pass occupies residues 173–193; the sequence is VLFFSIFSMCCLLGLATWQVL. At 194–206 the chain is on the cytoplasmic side; the sequence is YLRRYFKAKKLIE.

This sequence belongs to the EMP24/GP25L family.

The protein localises to the membrane. Functionally, eca and bai are essential, though not redundant, for dorsoventral patterning of the embryo. Specifically required during early embryogenesis for the activity of maternal tkv, while the zygotic tkv is not affected. In Drosophila willistoni (Fruit fly), this protein is Transmembrane emp24 domain-containing protein bai.